The following is a 631-amino-acid chain: Fatty acid ABC transporter ATP-binding/permease protein (631 aa).

The segment covering 1 to 11 (MTAPPGARPRA) has biased composition (low complexity). Positions 1–20 (MTAPPGARPRAASPPPNMRS) are disordered. Helical transmembrane passes span 42-62 (IAVI…PRIL), 123-143 (LALA…QARL), and 205-225 (ILTM…LALI). The ABC transmembrane type-1 domain maps to 42–365 (IAVITLGIAG…LAGMYNALQS (324 aa)). The ABC transporter domain maps to 397–631 (VEFEHVNFAY…RGVYYQMTRA (235 aa)). Position 430 to 437 (430 to 437 (GPTGAGKT)) interacts with ATP.

It belongs to the ABC transporter superfamily. Lipid exporter (TC 3.A.1.106) family.

The protein resides in the cell inner membrane. In terms of biological role, ABC transporter involved in fatty acid import. Transmembrane domains (TMD) form a pore in the membrane and the ATP-binding domain (NBD) is responsible for energy generation. The protein is Fatty acid ABC transporter ATP-binding/permease protein of Mycobacterium bovis (strain ATCC BAA-935 / AF2122/97).